The chain runs to 212 residues: tRNA (guanine-N(7)-)-methyltransferase (212 aa).

Positions 44, 69, 96, and 118 each coordinate S-adenosyl-L-methionine. The active site involves Asp-118. Residue Lys-122 participates in substrate binding. The tract at residues 124-129 is interaction with RNA; that stretch reads RHEKRR. Substrate is bound by residues Asp-154 and 191-194; that span reads TEYE.

It belongs to the class I-like SAM-binding methyltransferase superfamily. TrmB family.

It catalyses the reaction guanosine(46) in tRNA + S-adenosyl-L-methionine = N(7)-methylguanosine(46) in tRNA + S-adenosyl-L-homocysteine. It participates in tRNA modification; N(7)-methylguanine-tRNA biosynthesis. Functionally, catalyzes the formation of N(7)-methylguanine at position 46 (m7G46) in tRNA. The sequence is that of tRNA (guanine-N(7)-)-methyltransferase from Streptococcus gordonii (strain Challis / ATCC 35105 / BCRC 15272 / CH1 / DL1 / V288).